Here is a 514-residue protein sequence, read N- to C-terminus: Exoglucanase 1 (514 aa).

A signal peptide spans 1–17; that stretch reads MYQKLALISAFLATARA. The tract at residues 18-453 is catalytic; sequence QSACTLQAET…GSTGNSSGGN (436 aa). 10 disulfides stabilise this stretch: Cys21/Cys89, Cys36/Cys42, Cys67/Cys88, Cys78/Cys84, Cys155/Cys414, Cys189/Cys227, Cys193/Cys226, Cys247/Cys273, Cys255/Cys260, and Cys278/Cys348. N-linked (GlcNAc...) asparagine glycans are attached at residues Asn62 and Asn81. The active-site Nucleophile is Glu229. Glu234 acts as the Proton donor in catalysis. Asn287 carries an N-linked (GlcNAc...) asparagine glycan. 2 disordered regions span residues 401–427 and 444–481; these read NETS…LESN and GSTG…PTQT. The segment at 454–478 is linker; that stretch reads PPGGNPPGTTTTRRPATSTGSSPGP. Residues 460–479 are compositionally biased toward low complexity; that stretch reads PGTTTTRRPATSTGSSPGPT. The CBM1 domain occupies 478 to 514; that stretch reads PTQTHYGQCGGIGYSGPTVCASGSTCQVLNPYYSQCL. 2 disulfide bridges follow: Cys486–Cys503 and Cys497–Cys513.

It belongs to the glycosyl hydrolase 7 (cellulase C) family.

It carries out the reaction Hydrolysis of (1-&gt;4)-beta-D-glucosidic linkages in cellulose and cellotetraose, releasing cellobiose from the non-reducing ends of the chains.. Its function is as follows. The biological conversion of cellulose to glucose generally requires three types of hydrolytic enzymes: (1) Endoglucanases which cut internal beta-1,4-glucosidic bonds; (2) Exocellobiohydrolases that cut the disaccharide cellobiose from the non-reducing end of the cellulose polymer chain; (3) Beta-1,4-glucosidases which hydrolyze the cellobiose and other short cello-oligosaccharides to glucose. This is Exoglucanase 1 (cbh1) from Hypocrea rufa (Trichoderma viride).